The primary structure comprises 316 residues: Biotin synthase (316 aa).

Residues asparagine 36–alanine 260 enclose the Radical SAM core domain. Residues cysteine 51, cysteine 55, and cysteine 58 each contribute to the [4Fe-4S] cluster site. Residues cysteine 95, cysteine 126, cysteine 186, and arginine 258 each contribute to the [2Fe-2S] cluster site.

The protein belongs to the radical SAM superfamily. Biotin synthase family. In terms of assembly, homodimer. It depends on [4Fe-4S] cluster as a cofactor. [2Fe-2S] cluster serves as cofactor.

The catalysed reaction is (4R,5S)-dethiobiotin + (sulfur carrier)-SH + 2 reduced [2Fe-2S]-[ferredoxin] + 2 S-adenosyl-L-methionine = (sulfur carrier)-H + biotin + 2 5'-deoxyadenosine + 2 L-methionine + 2 oxidized [2Fe-2S]-[ferredoxin]. The protein operates within cofactor biosynthesis; biotin biosynthesis; biotin from 7,8-diaminononanoate: step 2/2. In terms of biological role, catalyzes the conversion of dethiobiotin (DTB) to biotin by the insertion of a sulfur atom into dethiobiotin via a radical-based mechanism. In Lawsonia intracellularis (strain PHE/MN1-00), this protein is Biotin synthase.